The chain runs to 176 residues: MGSVNSRGHKAEAQVVMMGLDSAGKTTILYKLKGNQLVDTLPTVGFNVEPLEAPGHVSLTLWDIGGQTQLRATWKDYLEGIDLLVYVLDSTDEARLPEAVAELKEVLEDPNMAGVPFLVLANKQEAPGALPLLEIRNRLGLEGFQKHCWELRACSALTGQGLQEALQSLLHLLKSR.

A lipid anchor (N-myristoyl glycine) is attached at glycine 2. GTP-binding positions include glycine 19 to threonine 26, aspartate 63 to glutamine 67, and asparagine 122 to glutamate 125.

It belongs to the small GTPase superfamily. Arf family.

In terms of biological role, may play a role in apoptosis. May act as a tumor suppressor. The sequence is that of ADP-ribosylation factor-like protein 11 (Arl11) from Mus musculus (Mouse).